The following is a 1460-amino-acid chain: Probable outer membrane protein PmpC (1460 aa).

Positions 1 to 20 are cleaved as a signal peptide; sequence MKFLSATAVFAAALPSITSA. 5 disordered regions span residues 21–48, 92–212, 279–372, 455–549, and 993–1021; these read SSVE…FTEI, SEEN…PDKD, TPPA…ESGS, TPEE…DSSI, and VDTS…TAQA. The span at 34–44 shows a compositional bias: low complexity; it reads SSRTGSSSSQS. The segment covering 97–114 has biased composition (polar residues); the sequence is QASFQDSAQNQTENASEG. Low complexity predominate over residues 115–137; the sequence is NSPNSENTNQSSTTETESITTDE. The segment covering 138-155 has biased composition (polar residues); sequence QVQNDNESAASVPTTVET. Low complexity predominate over residues 290-327; sequence NDPSGSNGNDGSDDSNSSGNTDSNESNPNNSASNNTGS. The segment covering 328-358 has biased composition (polar residues); that stretch reads ENELSSSTPSAQLPNPATPFLSSVSTNSQPI. Residues 461–471 show a composition bias toward low complexity; that stretch reads LKSSQLNNQNP. The segment covering 487–501 has biased composition (polar residues); that stretch reads SLETSPITNQDSASS. Composition is skewed to low complexity over residues 504-548 and 995-1018; these read AIFR…SDSS and TSTN…STPT. Residues 1167 to 1460 form the Autotransporter domain; the sequence is DEVAYNNLWI…MINCGARMTF (294 aa).

This sequence belongs to the PMP outer membrane protein family.

It is found in the secreted. It localises to the cell wall. The protein resides in the cell outer membrane. The protein is Probable outer membrane protein PmpC (pmpC) of Chlamydia muridarum (strain MoPn / Nigg).